The following is a 103-amino-acid chain: Cell division topological specificity factor (103 aa).

Belongs to the MinE family.

In terms of biological role, prevents the cell division inhibition by proteins MinC and MinD at internal division sites while permitting inhibition at polar sites. This ensures cell division at the proper site by restricting the formation of a division septum at the midpoint of the long axis of the cell. This is Cell division topological specificity factor from Prochlorococcus marinus (strain MIT 9211).